The following is a 1031-amino-acid chain: Putative protein TIC 214 N-terminal part (1031 aa).

6 helical membrane passes run 11–31, 68–88, 92–112, 127–147, 166–186, and 212–232; these read ILWA…LFGL, TLGQ…IMLL, AITL…KDLS, GIIQ…ILLP, SFFV…LINL, and TFSI…PVPF.

This sequence belongs to the TIC214 family. As to quaternary structure, part of the Tic complex.

Its subcellular location is the plastid. The protein localises to the chloroplast inner membrane. Involved in protein precursor import into chloroplasts. May be part of an intermediate translocation complex acting as a protein-conducting channel at the inner envelope. The polypeptide is Putative protein TIC 214 N-terminal part (Anthoceros angustus (Hornwort)).